A 160-amino-acid chain; its full sequence is Secreted RxLR effector protein 83 (160 aa).

An N-terminal signal peptide occupies residues 1–21 (MLVLLAATFFIYISRLTSTDA). A RxLR motif is present at residues 27-30 (RGLR). N-linked (GlcNAc...) asparagine glycans are attached at residues Asn39 and Asn131.

This sequence belongs to the RxLR effector family.

It is found in the secreted. The protein resides in the host nucleus. It localises to the host cytoplasm. In terms of biological role, secreted effector that completely suppresses the host cell death induced by cell death-inducing proteins. The protein is Secreted RxLR effector protein 83 of Plasmopara viticola (Downy mildew of grapevine).